The primary structure comprises 638 residues: 1-deoxy-D-xylulose-5-phosphate synthase (638 aa).

Thiamine diphosphate-binding positions include His71 and 112 to 114 (SHA). Residue Asp144 participates in Mg(2+) binding. Thiamine diphosphate contacts are provided by residues 145–146 (GA), Asn173, Tyr284, and Glu365. Residue Asn173 participates in Mg(2+) binding.

Belongs to the transketolase family. DXPS subfamily. In terms of assembly, homodimer. The cofactor is Mg(2+). Thiamine diphosphate serves as cofactor.

The catalysed reaction is D-glyceraldehyde 3-phosphate + pyruvate + H(+) = 1-deoxy-D-xylulose 5-phosphate + CO2. It participates in metabolic intermediate biosynthesis; 1-deoxy-D-xylulose 5-phosphate biosynthesis; 1-deoxy-D-xylulose 5-phosphate from D-glyceraldehyde 3-phosphate and pyruvate: step 1/1. Its function is as follows. Catalyzes the acyloin condensation reaction between C atoms 2 and 3 of pyruvate and glyceraldehyde 3-phosphate to yield 1-deoxy-D-xylulose-5-phosphate (DXP). In Mycobacterium bovis (strain ATCC BAA-935 / AF2122/97), this protein is 1-deoxy-D-xylulose-5-phosphate synthase.